Consider the following 313-residue polypeptide: Protoheme IX farnesyltransferase (313 aa).

The next 9 membrane-spanning stretches (helical) occupy residues 29–49 (VISLLLWTTVTAMFMAARGWP), 57–77 (LWLLIVVSVAGYMSAGSAGVF), 101–123 (LISSRNAAIFGTTLQVLSFVMLW), 124–144 (VWGTPLAAWMSLAGFVFYVVI), 157–177 (IVIGGAAGCFPPLVGWAAVTG), 185–205 (YLFAIIFFWTPVHFWALALMI), 225–245 (MTVAQIGLYAIYTVVLSLMPV), 247–267 (FGAVSWIYFVSGALLGAWLLW), and 287–307 (AVPLYLYSMLYLALLFLAGAI).

The protein belongs to the UbiA prenyltransferase family. Protoheme IX farnesyltransferase subfamily.

Its subcellular location is the cell membrane. The catalysed reaction is heme b + (2E,6E)-farnesyl diphosphate + H2O = Fe(II)-heme o + diphosphate. Its pathway is porphyrin-containing compound metabolism; heme O biosynthesis; heme O from protoheme: step 1/1. In terms of biological role, converts heme B (protoheme IX) to heme O by substitution of the vinyl group on carbon 2 of heme B porphyrin ring with a hydroxyethyl farnesyl side group. In Deinococcus radiodurans (strain ATCC 13939 / DSM 20539 / JCM 16871 / CCUG 27074 / LMG 4051 / NBRC 15346 / NCIMB 9279 / VKM B-1422 / R1), this protein is Protoheme IX farnesyltransferase.